Here is a 79-residue protein sequence, read N- to C-terminus: Conotoxin Vi6.3 (79 aa).

The first 22 residues, 1 to 22, serve as a signal peptide directing secretion; it reads MKLTCVLIITVLFLTASQLITA. Positions 23–47 are excised as a propeptide; that stretch reads DYSRDQRQYRAVRLGDEMRNFKGAR. Intrachain disulfides connect cysteine 49–cysteine 62, cysteine 56–cysteine 67, and cysteine 61–cysteine 77. 2 positions are modified to 4-hydroxyproline: proline 60 and proline 63.

This sequence belongs to the conotoxin O1 superfamily. As to expression, expressed by the venom duct.

Its subcellular location is the secreted. Ion channel inhibitor that inhibits the increase in intracellular calcium upon depolarization in DRG neurons. In vivo, both intraperitoneal and intracranial injections into mice induce hyperactivity. The protein is Conotoxin Vi6.3 of Conus virgo (Virgin cone).